The sequence spans 480 residues: Glutamate--tRNA ligase (480 aa).

Positions 21-31 (PSPTGYLHVGG) match the 'HIGH' region motif. Residues Cys-110, Cys-112, Cys-137, and His-139 each contribute to the Zn(2+) site. The 'KMSKS' region motif lies at 248 to 252 (KLSKR). An ATP-binding site is contributed by Lys-251.

The protein belongs to the class-I aminoacyl-tRNA synthetase family. Glutamate--tRNA ligase type 1 subfamily. In terms of assembly, monomer. Zn(2+) serves as cofactor.

It localises to the cytoplasm. The catalysed reaction is tRNA(Glu) + L-glutamate + ATP = L-glutamyl-tRNA(Glu) + AMP + diphosphate. Catalyzes the attachment of glutamate to tRNA(Glu) in a two-step reaction: glutamate is first activated by ATP to form Glu-AMP and then transferred to the acceptor end of tRNA(Glu). The protein is Glutamate--tRNA ligase of Haemophilus influenzae (strain 86-028NP).